A 420-amino-acid polypeptide reads, in one-letter code: MTNALLEDLKWRGLIYQQTDESGIENILNKEQVTLYCGADPTADSLHIGHLLPFLTLRRFQEHGHRPLVLIGGGTGMIGDPSGKSEERTLQTEAQVETNVQGINKQMHKIFEFDTEKGAKLVNNKDWLGQISLIDFLRDYGKHVGVNYMLGKDSIQTRLEHGISYTEFTYTILQAIDFGHLNRTYNCKVQVGGSDQWGNITSGIELMRRMYGQTEAYGLTIPLVVKSDGKKFGKTEGGAVWLDAAKTSPYEFYQFWINTTDDDVIKFLKYFTFLEQEEIEALEKSLNEAPHLREAQKALAENVTRFIHGQDALDDAIRISQALFAGDLQSLSASELKEGFKDVPQVELSSETRNIVEVIVETGISSSKRQAREDVNNGAIYINGIRQQDVNYELTSEDKIENEFTIIRRGKKKYFMVNYK.

Tyr36 is a binding site for L-tyrosine. A 'HIGH' region motif is present at residues 41 to 50; sequence PTADSLHIGH. The L-tyrosine site is built by Tyr170 and Gln174. Positions 231–235 match the 'KMSKS' region motif; sequence KFGKT. Lys234 is an ATP binding site. Positions 353–420 constitute an S4 RNA-binding domain; sequence RNIVEVIVET…KKKYFMVNYK (68 aa).

This sequence belongs to the class-I aminoacyl-tRNA synthetase family. TyrS type 1 subfamily. In terms of assembly, homodimer.

It localises to the cytoplasm. The catalysed reaction is tRNA(Tyr) + L-tyrosine + ATP = L-tyrosyl-tRNA(Tyr) + AMP + diphosphate + H(+). In terms of biological role, catalyzes the attachment of tyrosine to tRNA(Tyr) in a two-step reaction: tyrosine is first activated by ATP to form Tyr-AMP and then transferred to the acceptor end of tRNA(Tyr). This is Tyrosine--tRNA ligase from Staphylococcus saprophyticus subsp. saprophyticus (strain ATCC 15305 / DSM 20229 / NCIMB 8711 / NCTC 7292 / S-41).